The sequence spans 477 residues: Argininosuccinate lyase (477 aa).

This sequence belongs to the lyase 1 family. Argininosuccinate lyase subfamily.

The protein localises to the cytoplasm. It carries out the reaction 2-(N(omega)-L-arginino)succinate = fumarate + L-arginine. It functions in the pathway amino-acid biosynthesis; L-arginine biosynthesis; L-arginine from L-ornithine and carbamoyl phosphate: step 3/3. In Corynebacterium efficiens (strain DSM 44549 / YS-314 / AJ 12310 / JCM 11189 / NBRC 100395), this protein is Argininosuccinate lyase.